An 882-amino-acid polypeptide reads, in one-letter code: Alanine--tRNA ligase (882 aa).

His-567, His-571, Cys-669, and His-673 together coordinate Zn(2+).

It belongs to the class-II aminoacyl-tRNA synthetase family. It depends on Zn(2+) as a cofactor.

The protein resides in the cytoplasm. It catalyses the reaction tRNA(Ala) + L-alanine + ATP = L-alanyl-tRNA(Ala) + AMP + diphosphate. Its function is as follows. Catalyzes the attachment of alanine to tRNA(Ala) in a two-step reaction: alanine is first activated by ATP to form Ala-AMP and then transferred to the acceptor end of tRNA(Ala). Also edits incorrectly charged Ser-tRNA(Ala) and Gly-tRNA(Ala) via its editing domain. In Thermosynechococcus vestitus (strain NIES-2133 / IAM M-273 / BP-1), this protein is Alanine--tRNA ligase.